Consider the following 700-residue polypeptide: MSRRTRCEDLDELHYQDTDSDVPEQRDSKCKVKWTHEEDEQLRALVRQFGQQDWKFLASHFPNRTDQQCQYRWLRVLNPDLVKGPWTKEEDQKVIELVKKYGTKQWTLIAKHLKGRLGKQCRERWHNHLNPEVKKSCWTEEEDRIICEAHKVLGNRWAEIAKMLPGRTDNAVKNHWNSTIKRKVDTGGFLSESKDCKPPVYLLLELEDKDGLQSAQPTEGQGSLLTNWPSVPPTIKEEENSEEELAAATTSKEQEPIGTDLDAVRTPEPLEEFPKREDQEGSPPETSLPYKWVVEAANLLIPAVGSSLSEALDLIESDPDAWCDLSKFDLPEEPSAEDSINNSLVQLQASHQQQVLPPRQPSALVPSVTEYRLDGHTISDLSRSSRGELIPISPSTEVGGSGIGTPPSVLKRQRKRRVALSPVTENSTSLSFLDSCNSLTPKSTPVKTLPFSPSQFLNFWNKQDTLELESPSLTSTPVCSQKVVVTTPLHRDKTPLHQKHAAFVTPDQKYSMDNTPHTPTPFKNALEKYGPLKPLPQTPHLEEDLKEVLRSEAGIELIIEDDIRPEKQKRKPGLRRSPIKKVRKSLALDIVDEDVKLMMSTLPKSLSLPTTAPSNSSSLTLSGIKEDNSLLNQGFLQAKPEKAAVAQKPRSHFTTPAPMSSAWKTVACGGTRDQLFMQEKARQLLGRLKPSHTSRTLILS.

3 HTH myb-type domains span residues 26 to 77 (RDSK…LRVL), 78 to 133 (NPDL…NPEV), and 134 to 184 (KKSC…KRKV). The H-T-H motif DNA-binding region spans 54-77 (WKFLASHFPNRTDQQCQYRWLRVL). A Glycyl lysine isopeptide (Lys-Gly) (interchain with G-Cter in SUMO2) cross-link involves residue K104. 2 consecutive DNA-binding regions (H-T-H motif) follow at residues 106 to 129 (WTLI…HNHL) and 157 to 180 (WAEI…NSTI). Residues K194 and K197 each participate in a glycyl lysine isopeptide (Lys-Gly) (interchain with G-Cter in SUMO2) cross-link. 2 disordered regions span residues 212–287 (LQSA…PETS) and 391–412 (PISP…VLKR). Over residues 213–229 (QSAQPTEGQGSLLTNWP) the composition is skewed to polar residues. Residue S241 is modified to Phosphoserine. T266 is modified (phosphothreonine). K275 participates in a covalent cross-link: Glycyl lysine isopeptide (Lys-Gly) (interchain with G-Cter in SUMO2). A phosphoserine mark is found at S282 and S393. K411 participates in a covalent cross-link: Glycyl lysine isopeptide (Lys-Gly) (interchain with G-Cter in SUMO2). The Nuclear localization signal signature appears at 411–417 (KRQRKRR). T440 and T444 each carry phosphothreonine; by CDK2. Glycyl lysine isopeptide (Lys-Gly) (interchain with G-Cter in SUMO2) cross-links involve residues K447 and K482. A phosphothreonine; by CDK2 mark is found at T487 and T494. Residue K499 forms a Glycyl lysine isopeptide (Lys-Gly) (interchain with G-Cter in SUMO2) linkage. T505 carries the post-translational modification Phosphothreonine. Residue K509 forms a Glycyl lysine isopeptide (Lys-Gly) (interchain with G-Cter in SUMO2) linkage. Position 520 is a phosphothreonine; by CDK2 (T520). Residues K523, K533, and K546 each participate in a glycyl lysine isopeptide (Lys-Gly) (interchain with G-Cter in SUMO2) cross-link. The Bipartite nuclear localization signal motif lies at 564–584 (RPEKQKRKPGLRRSPIKKVRK). S577 carries the post-translational modification Phosphoserine; by CDK2. Residues K584, K596, K625, K639, and K648 each participate in a glycyl lysine isopeptide (Lys-Gly) (interchain with G-Cter in SUMO2) cross-link.

As to quaternary structure, component of the DREAM complex (also named LINC complex) at least composed of E2F4, E2F5, LIN9, LIN37, LIN52, LIN54, MYBL1, MYBL2, RBL1, RBL2, RBBP4, TFDP1 and TFDP2. The complex exists in quiescent cells where it represses cell cycle-dependent genes. It dissociates in S phase when LIN9, LIN37, LIN52 and LIN54 form a subcomplex that binds to MYBL22. Interacts with CCNF (via the Cyclin N-terminal domain). Post-translationally, phosphorylated by cyclin A/CDK2 during S-phase. Phosphorylation at Thr-520 is probably involved in transcriptional activity.

The protein resides in the nucleus. In terms of biological role, transcription factor involved in the regulation of cell survival, proliferation, and differentiation. Transactivates the expression of the CLU gene. The protein is Myb-related protein B (MYBL2) of Homo sapiens (Human).